A 108-amino-acid polypeptide reads, in one-letter code: Transcription initiation factor IIA subunit 2 (108 aa).

The protein belongs to the TFIIA subunit 2 family. As to quaternary structure, TFIIA is a heterodimer of the large unprocessed subunit 1 and a small subunit gamma. It was originally believed to be a heterotrimer of an alpha, a beta and a gamma subunit. Interacts with NCOA6 general coactivator. TFIIA forms a complex with TBP.

The protein localises to the nucleus. TFIIA is a component of the transcription machinery of RNA polymerase II and plays an important role in transcriptional activation. TFIIA in a complex with TBP mediates transcriptional activity. This chain is Transcription initiation factor IIA subunit 2 (gtf2a2), found in Oncorhynchus mykiss (Rainbow trout).